Here is a 1415-residue protein sequence, read N- to C-terminus: DNA-directed RNA polymerase subunit beta' (1415 aa).

Residues Cys72, Cys74, Cys87, and Cys90 each contribute to the Zn(2+) site. Mg(2+) contacts are provided by Asp463, Asp465, and Asp467. 4 residues coordinate Zn(2+): Cys812, Cys886, Cys893, and Cys896.

It belongs to the RNA polymerase beta' chain family. The RNAP catalytic core consists of 2 alpha, 1 beta, 1 beta' and 1 omega subunit. When a sigma factor is associated with the core the holoenzyme is formed, which can initiate transcription. Mg(2+) serves as cofactor. Zn(2+) is required as a cofactor.

It catalyses the reaction RNA(n) + a ribonucleoside 5'-triphosphate = RNA(n+1) + diphosphate. In terms of biological role, DNA-dependent RNA polymerase catalyzes the transcription of DNA into RNA using the four ribonucleoside triphosphates as substrates. In Dinoroseobacter shibae (strain DSM 16493 / NCIMB 14021 / DFL 12), this protein is DNA-directed RNA polymerase subunit beta'.